Here is a 315-residue protein sequence, read N- to C-terminus: Calumenin-A (315 aa).

Residues 1-19 form the signal peptide; the sequence is MEIRPLLMCFALCVVYATS. EF-hand domains lie at 68 to 103, 104 to 139, 151 to 186, 188 to 223, 229 to 264, and 265 to 300; these read ESKN…AQKK, YIYD…TYLD, QMMA…EEYE, MKDI…HEDE, WVAT…ADYD, and HAEA…FVGS. Ca(2+) is bound by residues Asp-81, Asp-83, Asp-85, Glu-92, Asp-117, Asn-119, Asp-121, Met-123, and Glu-128. N-linked (GlcNAc...) asparagine glycosylation occurs at Asn-131. Ca(2+) contacts are provided by Asp-164, Asn-166, Asp-168, Glu-175, Asp-201, Asn-203, Asp-205, Glu-212, Asp-242, Asn-244, Asp-246, Lys-248, Glu-253, Asp-278, Asn-280, Asp-282, Lys-284, and Glu-289. A Prevents secretion from ER motif is present at residues 312–315; that stretch reads HDEF.

This sequence belongs to the CREC family. In terms of assembly, interacts with ggcx.

It localises to the endoplasmic reticulum membrane. The protein resides in the golgi apparatus. The protein localises to the secreted. Its subcellular location is the melanosome. It is found in the sarcoplasmic reticulum lumen. In terms of biological role, involved in regulation of vitamin K-dependent carboxylation of multiple N-terminal glutamate residues. Seems to inhibit gamma-carboxylase ggcx. Binds 7 calcium ions with a low affinity. This is Calumenin-A (calua) from Danio rerio (Zebrafish).